The following is a 110-amino-acid chain: MNYENPPPYASPPAPYPPYGQQQPSYPVPNQYPGNPPGPVGYQPAQPGYQGYPQYGWQGAPPANAPVYMDAPKNTVYVVEERRNDTSGESACLTACWTALCCCCLWDMLT.

Pro residues predominate over residues 1–18 (MNYENPPPYASPPAPYPP). Residues 1 to 45 (MNYENPPPYASPPAPYPPYGQQQPSYPVPNQYPGNPPGPVGYQPA) form a disordered region. Low complexity predominate over residues 19-29 (YGQQQPSYPVP). Residues 87 to 104 (SGESACLTACWTALCCCC) traverse the membrane as a helical segment.

The protein belongs to the CYSTM1 family.

Its subcellular location is the membrane. In Xenopus tropicalis (Western clawed frog), this protein is Cysteine-rich and transmembrane domain-containing protein 1 (cystm1).